A 54-amino-acid polypeptide reads, in one-letter code: uncharacterized protein (54 aa).

The signal sequence occupies residues 1–23; that stretch reads MKELIFFLLIIVILFVVFMVVSS.

This is an uncharacterized protein from Acheta domesticus (House cricket).